We begin with the raw amino-acid sequence, 72 residues long: UPF0346 protein EF_1680 (72 aa).

This sequence belongs to the UPF0346 family.

The sequence is that of UPF0346 protein EF_1680 from Enterococcus faecalis (strain ATCC 700802 / V583).